Reading from the N-terminus, the 553-residue chain is Transcriptional regulator HilA (553 aa).

Positions Asn-11–Arg-107 form a DNA-binding region, ompR/PhoB-type. At Asp-62 the chain carries 4-aspartylphosphate. The TPR repeat unit spans residues Ala-372–Arg-405.

Functionally, the main transcriptional regulator of the Salmonella pathogenicity island 1 (SPI1) gene expression. Activates the expression of invasion genes by a direct action at their promoters and also indirectly by increasing the level of InvF. Also binds upstream of prgH and directly activates the expression of prgHIJK operon. This Salmonella typhimurium (strain LT2 / SGSC1412 / ATCC 700720) protein is Transcriptional regulator HilA (hilA).